We begin with the raw amino-acid sequence, 369 residues long: uncharacterized protein (369 aa).

Over residues 110–121 (ARPTDAFGAPIA) the composition is skewed to low complexity. The segment at 110 to 172 (ARPTDAFGAP…PPPPASGGGA (63 aa)) is disordered. Positions 122 to 136 (PSEPTPASAPSPPKA) are enriched in pro residues.

This is an uncharacterized protein from Lymantria dispar multicapsid nuclear polyhedrosis virus (LdMNPV).